Reading from the N-terminus, the 607-residue chain is Threonine--tRNA ligase (607 aa).

The interval 1-143 is editing domain; that stretch reads MRVLYIHAER…SFKPEEARVA (143 aa). Catalytic regions lie at residues 193-489 and 194-489; these read PRYL…PRLP and RYLD…PRLP. The Zn(2+) site is built by cysteine 286, histidine 337, and histidine 458.

This sequence belongs to the class-II aminoacyl-tRNA synthetase family. As to quaternary structure, homodimer. Requires Zn(2+) as cofactor.

Its subcellular location is the cytoplasm. It carries out the reaction tRNA(Thr) + L-threonine + ATP = L-threonyl-tRNA(Thr) + AMP + diphosphate + H(+). In terms of biological role, catalyzes the attachment of threonine to tRNA(Thr) in a two-step reaction: L-threonine is first activated by ATP to form Thr-AMP and then transferred to the acceptor end of tRNA(Thr). Also edits incorrectly charged L-seryl-tRNA(Thr). The sequence is that of Threonine--tRNA ligase from Pyrobaculum calidifontis (strain DSM 21063 / JCM 11548 / VA1).